Here is a 267-residue protein sequence, read N- to C-terminus: MDKVLSFHQGRLPLLISMPHAGLRLSDAVRDGLVEEARSLPDTDWHIPQLYDFARDLGASVVAAEYSRFVIDLNRPDDDKPLYAGATTGLYPATLFEGEPLFKEGLAPSGEERKRYLEQIWRPYHGTLRRELDRLREQFGYALLWDAHSIRSHIPHLFDGKLPDFNLGTFNGASCDPVLAERLQGVCAEATGYSHVLNGRFKGGHITRHYGDPAKHIHAVQLELAQSTYMEETEPFTYREDLAQPTQVVLKQLLQALLAWGAERYQR.

It belongs to the N-formylglutamate deformylase family. In terms of assembly, monomer.

The enzyme catalyses N-formyl-L-glutamate + H2O = formate + L-glutamate. The protein operates within amino-acid degradation; L-histidine degradation into L-glutamate; L-glutamate from N-formimidoyl-L-glutamate (deiminase route): step 2/2. Stimulated by Co(2+). Fe(2+) is also a good activator, particularly at lower concentrations, but it inhibits slightly the activity when used at concentrations over 0.1 mM. Other divalent metals tested (Cd(2+), Ca(2+), Mn(2+), Zn(2+), Ni(2+) and Mg(2+)) are not effective activators. In terms of biological role, catalyzes the hydrolysis of N-formyl-L-glutamate to formate and L-glutamate. The polypeptide is N-formylglutamate deformylase (Pseudomonas putida (Arthrobacter siderocapsulatus)).